Consider the following 186-residue polypeptide: Negative modulator of initiation of replication (186 aa).

The protein belongs to the SeqA family. As to quaternary structure, homodimer. Polymerizes to form helical filaments.

It is found in the cytoplasm. Negative regulator of replication initiation, which contributes to regulation of DNA replication and ensures that replication initiation occurs exactly once per chromosome per cell cycle. Binds to pairs of hemimethylated GATC sequences in the oriC region, thus preventing assembly of replication proteins and re-initiation at newly replicated origins. Repression is relieved when the region becomes fully methylated. In Glaesserella parasuis serovar 5 (strain SH0165) (Haemophilus parasuis), this protein is Negative modulator of initiation of replication.